The sequence spans 143 residues: Hemoglobin subunit alpha-2 (143 aa).

At Ser-2 the chain carries N-acetylserine. A Globin domain is found at 2 to 143 (SLSSKDKATV…LALALSEKYR (142 aa)). An O2-binding site is contributed by His-60. Heme b is bound at residue His-89.

It belongs to the globin family. As to quaternary structure, hb 2 is a heterotetramer of two alpha-2 and two beta-1 chains. Hb 3 is a heterotetramer of two alpha-2 and two beta-2 chains. Red blood cells.

Its function is as follows. Involved in oxygen transport from gills to the various peripheral tissues. In Arctogadus glacialis (Arctic cod), this protein is Hemoglobin subunit alpha-2 (hba2).